A 66-amino-acid polypeptide reads, in one-letter code: Large ribosomal subunit protein bL33c (66 aa).

It belongs to the bacterial ribosomal protein bL33 family.

The protein resides in the plastid. It is found in the chloroplast. The sequence is that of Large ribosomal subunit protein bL33c from Jasminum nudiflorum (Winter jasmine).